Reading from the N-terminus, the 143-residue chain is Anti-sigma F factor (143 aa).

It belongs to the anti-sigma-factor family.

It carries out the reaction L-seryl-[protein] + ATP = O-phospho-L-seryl-[protein] + ADP + H(+). It catalyses the reaction L-threonyl-[protein] + ATP = O-phospho-L-threonyl-[protein] + ADP + H(+). Its function is as follows. Binds to sigma F and blocks its ability to form an RNA polymerase holoenzyme (E-sigma F). Phosphorylates SpoIIAA on a serine residue. This phosphorylation may enable SpoIIAA to act as an anti-anti-sigma factor that counteracts SpoIIAB and thus releases sigma F from inhibition. The sequence is that of Anti-sigma F factor from Caldanaerobacter subterraneus subsp. tengcongensis (strain DSM 15242 / JCM 11007 / NBRC 100824 / MB4) (Thermoanaerobacter tengcongensis).